The primary structure comprises 142 residues: Hemoglobin subunit alpha-1/2 (142 aa).

The Globin domain maps to 2 to 142; that stretch reads VLSPADKTNI…VSTVLTSKYR (141 aa). Ser-4 carries the post-translational modification Phosphoserine. Lys-8 is subject to N6-succinyllysine. Thr-9 is subject to Phosphothreonine. Lys-12 carries the post-translational modification N6-succinyllysine. Lys-17 carries the N6-acetyllysine; alternate modification. The residue at position 17 (Lys-17) is an N6-succinyllysine; alternate. Tyr-25 bears the Phosphotyrosine mark. Lys-41 carries the post-translational modification N6-succinyllysine. His-59 is an O2 binding site. His-88 contributes to the heme b binding site. Ser-103 carries the phosphoserine modification. At Thr-109 the chain carries Phosphothreonine. Ser-125 bears the Phosphoserine mark. Phosphothreonine occurs at positions 135 and 138. A Phosphoserine modification is found at Ser-139.

The protein belongs to the globin family. As to quaternary structure, heterotetramer of two alpha chains and two beta chains. As to expression, red blood cells.

Its function is as follows. Involved in oxygen transport from the lung to the various peripheral tissues. In Oryctolagus cuniculus (Rabbit), this protein is Hemoglobin subunit alpha-1/2.